The chain runs to 360 residues: NADP-dependent alcohol dehydrogenase 6 (360 aa).

Residue cysteine 46 participates in Zn(2+) binding. Positions 47 and 51 each coordinate NADP(+). Zn(2+) is bound by residues histidine 68, cysteine 100, cysteine 103, cysteine 106, and cysteine 114. Serine 131 carries the phosphoserine modification. Residue cysteine 163 coordinates Zn(2+). NADP(+) is bound by residues leucine 188, glycine 190, isoleucine 191, serine 210, arginine 211, lysine 215, cysteine 250, serine 252, threonine 255, aspartate 256, isoleucine 275, isoleucine 277, tyrosine 298, serine 299, leucine 301, and arginine 348. The residue at position 359 (serine 359) is a Phosphoserine.

Belongs to the zinc-containing alcohol dehydrogenase family. In terms of assembly, homodimer. Zn(2+) is required as a cofactor.

The protein localises to the cytoplasm. It is found in the nucleus. It catalyses the reaction a primary alcohol + NADP(+) = an aldehyde + NADPH + H(+). It carries out the reaction (E)-cinnamyl alcohol + NADP(+) = (E)-cinnamaldehyde + NADPH + H(+). The enzyme catalyses hexan-1-ol + NADP(+) = hexanal + NADPH + H(+). The catalysed reaction is 3-methylbutanol + NADP(+) = 3-methylbutanal + NADPH + H(+). It catalyses the reaction S-nitroso-CoA + NADPH + H(+) = sulfinamide-CoA + NADP(+). In terms of biological role, NADP-dependent, medium-chain alcohol dehydrogenase with a broad substrate specificity. Aldehydes exhibited 50-12000 times higher catalytic efficiency than the corresponding alcohols, therefore the major function of the enzyme is as an aldehyde reductase. The enzyme is active towards aromatic and aliphatic (linear and branched-chain) aldehydes. The enzyme is very active towards aromatic aldehydes, such as cinnamaldehyde, benzaldehyde and substituted benzaldehydes, such as veratraldehyde and panisaldehyde. It exhibits low activity towards substituted cinnamaldehydes, such as coniferaldehyde and sinapaldehyde. The enzyme has no activity with ketones, such as acetone or cyclohexanone. For the reverse reaction, linear and branched-chain primary alcohols are substrates, whereas very low activity is found with secondary alcohols, such as butan-2-ol. The enzyme may be physiologically involved in several steps of the lignin degradation pathway, initiated by other microorganisms, in the synthesis of fusel alcohols, products derived from the aminoacidic metabolism, and in the homeostasis of NADP(H). Has the ability to reduce 5-hydroxymethyl furfural (HMF), a furan derivative which is formed during the hydrolysis of lignocellulosic materials, to 5-hydroxymethylfurfuryl alcohol, thereby alleviating the inhibition of the fermentation of lignocellulose hydrolysates by HMF during fuel ethanol production. Also acts as an inhibitor of protein S-nitrosylation by mediating degradation of S-nitroso-coenzyme A (S-nitroso-CoA), a cofactor required to S-nitrosylate proteins. This is NADP-dependent alcohol dehydrogenase 6 from Saccharomyces cerevisiae (strain ATCC 204508 / S288c) (Baker's yeast).